The primary structure comprises 164 residues: MADS-box transcription factor 51 (164 aa).

The MADS-box domain maps to 2–62 (ARRGRVQLRR…GKLYEYSSSS (61 aa)). A disordered region spans residues 133 to 164 (TKSKKMLAKQNGEGSRSRANSSGSRGQEEGSA).

As to expression, widely expressed.

The protein resides in the nucleus. Functionally, probable transcription factor involved in the regulation of flowering time under short day (SD) conditions. Functions as a promoter of flowering under SD conditions, upstream of EHD1, HD3A and MADS14, but downstream of GIGANTEA (GI). May transmit a SD promotion signal from GI to EHD1. Functions independently of MADS50 to control flowering time. This Oryza sativa subsp. japonica (Rice) protein is MADS-box transcription factor 51.